Reading from the N-terminus, the 197-residue chain is Nascent polypeptide-associated complex subunit alpha (197 aa).

Positions 1–18 are enriched in basic and acidic residues; the sequence is MTGSTETRHNEKDVKEPQ. Positions 1–30 are disordered; it reads MTGSTETRHNEKDVKEPQVDSDADSDNEAI. Positions 19–28 are enriched in acidic residues; the sequence is VDSDADSDNE. Residues 58–123 form the NAC-A/B domain; that stretch reads SRSEKKARKL…AKIEDLTQHA (66 aa). Residues 134 to 155 form a disordered region; it reads TREAPQLKTVEEDDNEDVEEDS. Positions 144–155 are enriched in acidic residues; the sequence is EEDDNEDVEEDS. The UBA domain maps to 158–195; the sequence is IEEKDIELVISQANTTRNKAIRALKDADNDIVNAIMSL.

The protein belongs to the NAC-alpha family.

Functionally, may promote appropriate targeting of ribosome-nascent polypeptide complexes. The protein is Nascent polypeptide-associated complex subunit alpha of Caenorhabditis briggsae.